Consider the following 240-residue polypeptide: Ribosomal RNA large subunit methyltransferase E (240 aa).

Residues 1–20 (MSKAGGNKGGSRTGGRGGAG) show a composition bias toward gly residues. Residues 1 to 40 (MSKAGGNKGGSRTGGRGGAGSSNLHVRVKKKAGTTKESSR) form a disordered region. S-adenosyl-L-methionine is bound by residues glycine 92, tryptophan 94, aspartate 115, aspartate 131, and aspartate 155. The Proton acceptor role is filled by lysine 195.

Belongs to the class I-like SAM-binding methyltransferase superfamily. RNA methyltransferase RlmE family.

The protein localises to the cytoplasm. It catalyses the reaction uridine(2552) in 23S rRNA + S-adenosyl-L-methionine = 2'-O-methyluridine(2552) in 23S rRNA + S-adenosyl-L-homocysteine + H(+). In terms of biological role, specifically methylates the uridine in position 2552 of 23S rRNA at the 2'-O position of the ribose in the fully assembled 50S ribosomal subunit. The protein is Ribosomal RNA large subunit methyltransferase E of Brucella ovis (strain ATCC 25840 / 63/290 / NCTC 10512).